Consider the following 1064-residue polypeptide: Lysine-specific demethylase 4A (1064 aa).

Alanine 2 is modified (N-acetylalanine). Residues 14-56 (IMTFYPTMEEFRNFSRYIAYIESQGAHRAGLAKVVPPKEWKPR) form the JmjN domain. Residue tyrosine 132 coordinates 2-oxoglutarate. A JmjC domain is found at 142 to 308 (EKHVDEWNIG…YGKQAVLCSC (167 aa)). Residues histidine 188 and glutamate 190 each coordinate Fe cation. 2-oxoglutarate contacts are provided by asparagine 198 and lysine 206. Zn(2+) is bound by residues cysteine 234 and histidine 240. Lysine 241 serves as a coordination point for 2-oxoglutarate. Histidine 276 provides a ligand contact to Fe cation. Residues cysteine 306 and cysteine 308 each coordinate Zn(2+). 3 disordered regions span residues 358–384 (ELPP…EEGD), 501–537 (FSGS…RAQG), and 616–642 (SDDE…PLSQ). Over residues 366-382 (EEECPEDDMEGVEDGEE) the composition is skewed to acidic residues. The segment covering 509 to 532 (SSSLGSGSSRDSVSSDSETSEPLS) has biased composition (low complexity). Residue serine 523 is modified to Phosphoserine. The tract at residues 597–638 (RQPLSKLPRHHPLVLQECVSDDETSEQLTPEEEAEETEAWAK) is interaction with NCOR1. The span at 616 to 634 (SDDETSEQLTPEEEAEETE) shows a compositional bias: acidic residues. The PHD-type 1 zinc finger occupies 709-767 (MCFTSTGCGTDINLSTPYLEEDGTSILVSCKKCSVRVHASCYGVPPAKASEDWMCSRCS). The C2HC pre-PHD-type zinc finger occupies 772–805 (EEDCCLCSLRGGALQRANDDRWVHVSCAVAILEA). The segment at 828–885 (LKCIFCKKRRKRTAGCCVQCSHGRCPTAFHVSCAQAAGVMMQPDDWPFVVFITCFRHK) adopts a PHD-type 2 zinc-finger fold. 2 consecutive Tudor domains span residues 897-954 (QSIT…CLQF) and 955-1011 (GPPA…EELP).

The protein belongs to the JHDM3 histone demethylase family. Interacts with histone deacetylase proteins HDAC1, HDAC2 and HDAC3. Interacts with RB and NCOR1. Interacts with VRK1. It depends on Fe(2+) as a cofactor. In terms of processing, ubiquitinated by RNF8 and RNF168, leading to its degradation. Degradation promotes accessibility of H4K20me2 mark for DNA repair protein TP53BP1, which is then recruited. Also ubiquitinated by the SCF(FBXO22) complex; leading to proteasomal degradation.

It localises to the nucleus. It catalyses the reaction N(6),N(6),N(6)-trimethyl-L-lysyl(9)-[histone H3] + 2 2-oxoglutarate + 2 O2 = N(6)-methyl-L-lysyl(9)-[histone H3] + 2 formaldehyde + 2 succinate + 2 CO2. It carries out the reaction N(6),N(6),N(6)-trimethyl-L-lysyl(36)-[histone H3] + 2 2-oxoglutarate + 2 O2 = N(6)-methyl-L-lysyl(36)-[histone H3] + 2 formaldehyde + 2 succinate + 2 CO2. In terms of biological role, histone demethylase that specifically demethylates 'Lys-9' and 'Lys-36' residues of histone H3, thereby playing a central role in histone code. Does not demethylate histone H3 'Lys-4', H3 'Lys-27' nor H4 'Lys-20'. Demethylates trimethylated H3 'Lys-9' and H3 'Lys-36' residue, while it has no activity on mono- and dimethylated residues. Demethylation of Lys residue generates formaldehyde and succinate. Participates in transcriptional repression of ASCL2 and E2F-responsive promoters via the recruitment of histone deacetylases and NCOR1, respectively. In Pongo abelii (Sumatran orangutan), this protein is Lysine-specific demethylase 4A (KDM4A).